A 118-amino-acid chain; its full sequence is Putative pterin-4-alpha-carbinolamine dehydratase (118 aa).

The protein belongs to the pterin-4-alpha-carbinolamine dehydratase family.

The catalysed reaction is (4aS,6R)-4a-hydroxy-L-erythro-5,6,7,8-tetrahydrobiopterin = (6R)-L-erythro-6,7-dihydrobiopterin + H2O. This Pseudomonas putida (strain ATCC 700007 / DSM 6899 / JCM 31910 / BCRC 17059 / LMG 24140 / F1) protein is Putative pterin-4-alpha-carbinolamine dehydratase.